Consider the following 697-residue polypeptide: Probable potassium transporter 4 (697 aa).

Over 1-29 the chain is Cytoplasmic; the sequence is MSSSHTVTVSMDVEAGQKNKDKKGISQDL. The chain crosses the membrane as a helical span at residues 30 to 50; that stretch reads ILAYKTLGVVFGGLVTSPLYV. The Extracellular portion of the chain corresponds to 51–66; it reads YPSMNLTNPTEEDYLG. An N-linked (GlcNAc...) asparagine glycan is attached at Asn-55. A helical membrane pass occupies residues 67–87; the sequence is IYSIMFWTLTLIGVVKYICIA. The Cytoplasmic portion of the chain corresponds to 88–152; sequence LNADDHGEGG…FIESSIIARR (65 aa). A helical membrane pass occupies residues 153–173; sequence LLLLTAILGMCMLIGDGILTP. Topologically, residues 174-189 are extracellular; the sequence is AISVLSAIDGLRGPFP. A helical transmembrane segment spans residues 190 to 210; it reads SVSKPAVEGLSAAILVGLFLL. Residues 211 to 217 are Cytoplasmic-facing; sequence QKYGTSK. The chain crosses the membrane as a helical span at residues 218 to 238; that stretch reads VSFMFSPIMAAWTFATPVIGV. Residues 239–271 are Extracellular-facing; that stretch reads YSIWRYYPGIFKAMSPHYIVRFFMTNQTRGWQL. Asn-264 carries an N-linked (GlcNAc...) asparagine glycan. A helical transmembrane segment spans residues 272 to 292; it reads LGGTVLCITGAEAMFADLGHF. At 293–300 the chain is on the cytoplasmic side; that stretch reads SKRSIQIA. Residues 301–321 traverse the membrane as a helical segment; that stretch reads FMSSIYPSLVLTYAGQTAYLI. Topologically, residues 322–338 are extracellular; sequence NNVDDFSDGFYKFVPRP. Residues 339 to 359 form a helical membrane-spanning segment; that stretch reads VYWPMFIIATLAAIVASQSLI. Residues 360–390 are Cytoplasmic-facing; the sequence is SATFSVIKQSVVLDYFPRVKVVHTSKDKEGE. A helical transmembrane segment spans residues 391–411; sequence VYSPETNYMLMLLCVGVILGF. At 412–422 the chain is on the extracellular side; that stretch reads GDGKDIGNAFG. A helical membrane pass occupies residues 423–443; sequence VVVILVMLITTILLTLVMLII. The Cytoplasmic portion of the chain corresponds to 444–447; the sequence is WGTH. The chain crosses the membrane as a helical span at residues 448 to 468; that stretch reads VVLVALYLVPFLLLEATYVSA. The Extracellular portion of the chain corresponds to 469–475; it reads VCTKILR. The chain crosses the membrane as a helical span at residues 476–496; sequence GGWVPFAVSVALAAVMFGWYY. Residues 497–697 lie on the Cytoplasmic side of the membrane; that stretch reads GRQRKTEYEA…RVEIGMLYKA (201 aa).

The protein belongs to the HAK/KUP transporter (TC 2.A.72.3) family.

It is found in the membrane. In terms of biological role, high-affinity potassium transporter. This chain is Probable potassium transporter 4 (HAK4), found in Oryza sativa subsp. japonica (Rice).